A 204-amino-acid chain; its full sequence is Translation initiation factor 2 subunit beta (204 aa).

One can recognise a TRAM domain in the interval 146–204; sequence AIEEGKELEVHIESISKKGDGVARIGKYILYVAGTKAGQNVKVRITRISGQVAFTQKIL.

The protein belongs to the eIF-2-beta/eIF-5 family. In terms of assembly, heterotrimer composed of an alpha, a beta and a gamma chain.

In terms of biological role, eIF-2 functions in the early steps of protein synthesis by forming a ternary complex with GTP and initiator tRNA. This is Translation initiation factor 2 subunit beta from Methanocorpusculum labreanum (strain ATCC 43576 / DSM 4855 / Z).